We begin with the raw amino-acid sequence, 165 residues long: 3-isopropylmalate dehydratase small subunit (165 aa).

Belongs to the LeuD family. LeuD type 2 subfamily. Heterodimer of LeuC and LeuD.

The catalysed reaction is (2R,3S)-3-isopropylmalate = (2S)-2-isopropylmalate. It functions in the pathway amino-acid biosynthesis; L-leucine biosynthesis; L-leucine from 3-methyl-2-oxobutanoate: step 2/4. Functionally, catalyzes the isomerization between 2-isopropylmalate and 3-isopropylmalate, via the formation of 2-isopropylmaleate. This chain is 3-isopropylmalate dehydratase small subunit, found in Saccharolobus islandicus (strain Y.G.57.14 / Yellowstone #1) (Sulfolobus islandicus).